Reading from the N-terminus, the 743-residue chain is Dystrobrevin alpha (743 aa).

The interval 1 to 288 is interaction with MAGEE1; sequence MIEDSGKRGN…SHSNQHQMKE (288 aa). The ZZ-type zinc-finger motif lies at 238–294; that stretch reads FHPVECSYCHSESMMGFRYRCQQCHNYQLCQDCFWRGHAGGSHSNQHQMKEYTSWKS. Cys-243, Cys-246, Cys-258, Cys-261, Cys-267, Cys-270, His-280, and His-284 together coordinate Zn(2+). Residues 400 to 450 are syntrophin-binding region; that stretch reads DRLADEHVLIGLYVNMLRNNPSCMLESSNRLDEEHRLIARYAARLAAESSS. Residues 461–556 adopt a coiled-coil conformation; sequence DISFTIDANK…EGLMKLLKTQ (96 aa). The segment at 556-575 is disordered; that stretch reads QGAGSPRSSPSHTISRPIPM. Over residues 557 to 569 the composition is skewed to polar residues; the sequence is GAGSPRSSPSHTI. Ser-662 is subject to Phosphoserine.

Belongs to the dystrophin family. Dystrobrevin subfamily. As to quaternary structure, interacts with dystrophin, utrophin and the syntrophins SNTA1, SNTB1, SNTB2, SNTG1 and SNTG2. Interacts with MAGEE1. Binds dystrobrevin binding protein 1. Interacts with CTNNAL1. The interaction is required for correct localization of both CTNNAL1 and DTNA. In terms of assembly, does not interact with dystrophin. Phosphorylation of DTN-1 on tyrosine kinase substrate domain present in the C-terminus. In terms of tissue distribution, highly expressed in brain, skeletal and cardiac muscles, and expressed at lower levels in lung, liver and pancreas. Isoform 2 is not expressed in cardiac muscle. Isoform 7 and isoform 8 are only expressed in muscle.

The protein localises to the cytoplasm. Its subcellular location is the synapse. The protein resides in the cell membrane. Its function is as follows. May be involved in the formation and stability of synapses as well as being involved in the clustering of nicotinic acetylcholine receptors. This Homo sapiens (Human) protein is Dystrobrevin alpha.